We begin with the raw amino-acid sequence, 414 residues long: Tar DNA-binding protein homolog 1 (414 aa).

Composition is skewed to basic and acidic residues over residues 1-44 (MADE…KTTD) and 153-167 (DDGR…RAVE). 2 disordered regions span residues 1–58 (MADE…GDEP) and 132–167 (SSAD…RAVE). 2 RRM domains span residues 173–259 (VDLI…QGRP) and 262–341 (SRIF…IAQP). The disordered stretch occupies residues 343–414 (EENNQSVGPD…APGDSRGPGW (72 aa)). Residues 361–373 (NRRERDRPDRRPI) are compositionally biased toward basic and acidic residues.

In terms of assembly, interacts with chromobox protein homolog hpl-2; interaction may maintain localization of hpl-2 to gene bodies. Widely expressed in a range of tissues including body wall muscles, pharynx and neurons of the midbody in adults and larvae.

The protein localises to the nucleus. It is found in the cytoplasm. Its function is as follows. RNA-binding protein which regulates transcription, splicing and RNA-editing. Limits the accumulation of double-stranded RNA by maintaining the abundance of the mature RNA transcripts that are formed from double-stranded precursor RNAs. Stress response protein that acts downstream of daf-16 in the insulin/IGF pathway to regulate longevity and the cellular stress response to osmotic, oxidative, proteotoxic and endoplasmic reticulum stress. Involved in the regulation of physiological processes including aging, fertility, growth and locomotion. Plays a role in maintaining localization of chromobox protein homolog hpl-2 to gene bodies, perhaps acting via binding to nascent RNA transcripts. The protein is Tar DNA-binding protein homolog 1 of Caenorhabditis elegans.